Here is a 426-residue protein sequence, read N- to C-terminus: MRSQGNMSDRLGVEVDCHSLGSNECPSMGSSFSPLESPTPTPTSIYSQGSLASPSWPENGSYPGHAYDRGTGSTPIRGHFRLASMPSHENMGLPPYSSLDGQDRMAVTDFLPSYDENADQFWLPSDVPKTYDHHVHGLPCPPSMHQYPPMLRSNYRHHPAPYFPESATNPCLSRPIFHHQPERLPPSLSMSHMMPWMGHTESIAPETIAPSQVAPVTPPPSYTDFSNSINTFKTHSPDTPIRSCSLGTVSGADTPLSRLSGGAGEYMDECHQSPIYRDASGVRLQRQPSRKMARKQPSKQSLSLENLPSIIKQVQFKCKEPGCKGRFKRQEHLKRHMKSHSKEKPHVCWVPGCHRAFSRSDNLNAHYTKTHSKRGGRNRYVATLDETSPDYNPDYRGPLTADGRPMPGGTLDESMPSREISMEWDE.

Disordered regions lie at residues Cys-25–Thr-71 and Gly-281–Leu-302. The segment covering Ser-30 to Ser-44 has biased composition (low complexity). A compositionally biased stretch (polar residues) spans Ile-45–Glu-58. The span at Pro-288–Pro-297 shows a compositional bias: basic residues. C2H2-type zinc fingers lie at residues Phe-316–His-340 and His-346–His-371. The interval Leu-384–Glu-426 is disordered.

It is found in the nucleus. Functionally, brlA, abaA and wetA are pivotal regulators of conidiophore development and conidium maturation. They act individually and together to regulate their own expression and that of numerous other sporulation-specific genes. Binds promoters of target genes at brlA response elements (BREs) containing the conserved sequence 5'-(C/A)(A/G)AGGG(G/A)-3'. Positively regulates expression of the gliotoxin biosynthetic gene cluster in actively growing vegetative cells, and likely bridges morphological and chemical development during the life-cycle. Regulates (directly or indirectly) the ergot cluster genes. Positively regulates expression of the fumiquinazoline C biosynthetic gene cluster. Positively regulates expression of the melanin biosynthetic gene cluster. Mediates repression of ribosomal protein gene expression in response to nitrogen depletion. The sequence is that of C2H2 type master regulator of conidiophore development brlA from Aspergillus fumigatus (strain ATCC MYA-4609 / CBS 101355 / FGSC A1100 / Af293) (Neosartorya fumigata).